The following is a 105-amino-acid chain: Large ribosomal subunit protein eL36 (105 aa).

The disordered stretch occupies residues 86-105; sequence QAGKKKRDDIANINRKASAK.

It belongs to the eukaryotic ribosomal protein eL36 family.

The protein is Large ribosomal subunit protein eL36 (rpl36) of Dictyostelium discoideum (Social amoeba).